We begin with the raw amino-acid sequence, 322 residues long: 4-diphosphocytidyl-2-C-methyl-D-erythritol kinase (322 aa).

K27 is a catalytic residue. 112–122 (PVAGGMAGGSA) lines the ATP pocket. D154 is an active-site residue.

The protein belongs to the GHMP kinase family. IspE subfamily.

The enzyme catalyses 4-CDP-2-C-methyl-D-erythritol + ATP = 4-CDP-2-C-methyl-D-erythritol 2-phosphate + ADP + H(+). It participates in isoprenoid biosynthesis; isopentenyl diphosphate biosynthesis via DXP pathway; isopentenyl diphosphate from 1-deoxy-D-xylulose 5-phosphate: step 3/6. Catalyzes the phosphorylation of the position 2 hydroxy group of 4-diphosphocytidyl-2C-methyl-D-erythritol. This chain is 4-diphosphocytidyl-2-C-methyl-D-erythritol kinase, found in Mycolicibacterium smegmatis (strain ATCC 700084 / mc(2)155) (Mycobacterium smegmatis).